A 208-amino-acid chain; its full sequence is Glycerol-3-phosphate acyltransferase (208 aa).

Transmembrane regions (helical) follow at residues 3 to 23 (IIIM…VIIG), 55 to 75 (IVMV…TLLF), 81 to 101 (YTLL…YIGF), 113 to 133 (ILLA…LLLV), and 155 to 175 (IFYY…LFIF).

The protein belongs to the PlsY family. Probably interacts with PlsX.

The protein localises to the cell membrane. The catalysed reaction is an acyl phosphate + sn-glycerol 3-phosphate = a 1-acyl-sn-glycero-3-phosphate + phosphate. It participates in lipid metabolism; phospholipid metabolism. Catalyzes the transfer of an acyl group from acyl-phosphate (acyl-PO(4)) to glycerol-3-phosphate (G3P) to form lysophosphatidic acid (LPA). This enzyme utilizes acyl-phosphate as fatty acyl donor, but not acyl-CoA or acyl-ACP. The sequence is that of Glycerol-3-phosphate acyltransferase from Lactiplantibacillus plantarum (strain ATCC BAA-793 / NCIMB 8826 / WCFS1) (Lactobacillus plantarum).